A 331-amino-acid chain; its full sequence is Mitochondrial glycine transporter (331 aa).

3 Solcar repeats span residues Ser19–Gly103, Leu132–Arg216, and Ser234–Arg318. 6 helical membrane passes run Phe25–Gln50, Gly78–Leu104, Leu138–Glu163, Gly191–Lys214, Ile238–Leu264, and Gly293–Val311.

Belongs to the mitochondrial carrier (TC 2.A.29) family. SLC25A38 subfamily.

It is found in the mitochondrion inner membrane. The enzyme catalyses glycine(in) = glycine(out). Functionally, mitochondrial glycine transporter that imports glycine into the mitochondrial matrix. Plays an important role in providing glycine for the first enzymatic step in heme biosynthesis, the condensation of glycine with succinyl-CoA to produce 5-aminolevulinate (ALA) in the mitochondrial matrix. This Neosartorya fischeri (strain ATCC 1020 / DSM 3700 / CBS 544.65 / FGSC A1164 / JCM 1740 / NRRL 181 / WB 181) (Aspergillus fischerianus) protein is Mitochondrial glycine transporter.